The following is a 145-amino-acid chain: Large ribosomal subunit protein uL11 (145 aa).

This sequence belongs to the universal ribosomal protein uL11 family. Part of the ribosomal stalk of the 50S ribosomal subunit. Interacts with L10 and the large rRNA to form the base of the stalk. L10 forms an elongated spine to which L12 dimers bind in a sequential fashion forming a multimeric L10(L12)X complex. Post-translationally, one or more lysine residues are methylated.

Functionally, forms part of the ribosomal stalk which helps the ribosome interact with GTP-bound translation factors. The sequence is that of Large ribosomal subunit protein uL11 from Porphyromonas gingivalis (strain ATCC 33277 / DSM 20709 / CIP 103683 / JCM 12257 / NCTC 11834 / 2561).